Here is a 67-residue protein sequence, read N- to C-terminus: Arasin 2 (67 aa).

A signal peptide spans 1–25 (MERRTLLVVLLVCSCVVAAAAEASP). The disordered stretch occupies residues 22-44 (EASPSRWPSPGRPRPFPGRPNPI). Positions 31–44 (PGRPRPFPGRPNPI) are enriched in pro residues. 2 cysteine pairs are disulfide-bonded: C50–C59 and C52–C57.

In terms of assembly, interacts with chitin through the N-terminal region (26-48). This interaction may be important, since chitin is a component of the fungal cell wall, as well as of the crab exoskeleton (permitting a possible action of arasin in wound healing in case of lesions). Disulfide bonds are important for activity especially against Gram-negative bacteria, since the linearization of the peptide causes a strong decrease of activity on these bacteria. Mainly expressed in hemocytes. No or very low expression in heart, gills, inestines, and epidermis.

Functionally, antimicrobial peptide that has a large activity spectrum with activity against Gram-positive, Gram-negative bacteria, as well as against fungi. Shows activity at micromolar concentrations. Displays minimal inhibitory concentration (MIC) values lower than minimal bactericidal concentrations (MBC). May have a dual mode of action depending on the peptide concentrations. At MIC concentrations, the peptide penetrates into the cytoplasm of target cells (tested on the Gram-negative E.coli). The two inner membrane proteins YgdD and SbmA may be required for this uptake. At concentrations higher than MIC, arasin may act by disrupting membranes. Does not show hemolytic activity. This Hyas araneus (Atlantic lyre crab) protein is Arasin 2.